Reading from the N-terminus, the 112-residue chain is Small ribosomal subunit protein bS6c (112 aa).

This sequence belongs to the bacterial ribosomal protein bS6 family.

Its subcellular location is the plastid. The protein localises to the chloroplast. Its function is as follows. Binds together with bS18 to 16S ribosomal RNA. This is Small ribosomal subunit protein bS6c (rps6) from Porphyra purpurea (Red seaweed).